The sequence spans 312 residues: Ribosomal protein L11 methyltransferase (312 aa).

4 residues coordinate S-adenosyl-L-methionine: T160, G181, D203, and N246.

It belongs to the methyltransferase superfamily. PrmA family.

The protein localises to the cytoplasm. The enzyme catalyses L-lysyl-[protein] + 3 S-adenosyl-L-methionine = N(6),N(6),N(6)-trimethyl-L-lysyl-[protein] + 3 S-adenosyl-L-homocysteine + 3 H(+). In terms of biological role, methylates ribosomal protein L11. The chain is Ribosomal protein L11 methyltransferase from Staphylococcus aureus (strain MRSA252).